A 278-amino-acid chain; its full sequence is Neuronal membrane glycoprotein M6-a (278 aa).

Position 1 is an N-acetylmethionine (M1). The Cytoplasmic segment spans residues 1–22; the sequence is MEENMEEGQTQKGCFECCIKCL. The helical transmembrane segment at 23-43 threads the bilayer; it reads GGIPYASLIATILLYAGVALF. At 44–84 the chain is on the extracellular side; that stretch reads CGCGHEALSGTVNILQTYFELARTAGDTLDVFTMIDIFKYV. Residues 85–105 traverse the membrane as a helical segment; it reads IYGIAAAFFVYGILLMVEGFF. The Cytoplasmic segment spans residues 106–127; that stretch reads TTGAIKDLYGDFKITTCGRCVS. The helical transmembrane segment at 128–148 threads the bilayer; sequence AWFIMLTYLFMLAWLGVTAFT. Residues 149–213 lie on the Extracellular side of the membrane; sequence SLPVYMYFNV…STELNMTFHL (65 aa). N-linked (GlcNAc...) asparagine glycosylation is present at N164. C174 and C192 are joined by a disulfide. N208 carries N-linked (GlcNAc...) asparagine glycosylation. A helical membrane pass occupies residues 214–234; that stretch reads FIVALAGAGAAVIAMVHYLMV. At 235-278 the chain is on the cytoplasmic side; the sequence is LSANWAYVKDACRMQKYEDIKSKEEQELHDIHSTRSKERLNAYT. Position 256 is a phosphoserine (S256). T278 carries the post-translational modification Phosphothreonine.

Belongs to the myelin proteolipid protein family. Interacts with OPRM1. Interacts with palmitoyltransferase ZDHHC17/HIP14; the interaction leads to palmitoylation of GPM6A. In terms of processing, N-glycosylated. Palmitoylated by ZDHHC17/HIP14. As to expression, widely expressed in the CNS. Found especially in the granule cell layer of the cerebellum but not in the molecular layer or white matter. Expressed in the immature embryonic retina including the nerve fiber layer (NFL), inner plexiform layer (IPL), and outer plexiform layer (OPL). Weakly expressed in processes of Mueller glia cells.

It is found in the cell membrane. It localises to the cell projection. Its subcellular location is the axon. The protein localises to the growth cone. The protein resides in the dendritic spine. It is found in the filopodium. It localises to the neuron projection. Its function is as follows. Involved in neuronal differentiation, including differentiation and migration of neuronal stem cells. Plays a role in neuronal plasticity and is involved in neurite and filopodia outgrowth, filopodia motility and probably synapse formation. Gpm6a-induced filopodia formation involves mitogen-activated protein kinase (MAPK) and Src signaling pathways. Conflictingly, PubMed:22162747 reports that induced cellular protrusions are simple membrane-wrapped tubules without actin or tubulin-based cytoskeletons and with Gpm6a gliding along membrane edges indicative for a function in actin-independent membrane deformation. May be involved in neuronal NGF-dependent Ca(2+) influx. May be involved in regulation of endocytosis and intracellular trafficking of G-protein-coupled receptors (GPCRs); enhances internalization and recycling of mu-type opioid receptor. The sequence is that of Neuronal membrane glycoprotein M6-a (Gpm6a) from Mus musculus (Mouse).